We begin with the raw amino-acid sequence, 297 residues long: Protease HtpX homolog (297 aa).

A run of 2 helical transmembrane segments spans residues 14–34 and 39–59; these read VILL…AGYL and YQLG…SMIF. His-143 is a Zn(2+) binding site. Glu-144 is an active-site residue. Zn(2+) is bound at residue His-147. Transmembrane regions (helical) follow at residues 158-178 and 193-213; these read IAVA…RMMW and GFGA…PLAA. Position 225 (Glu-225) interacts with Zn(2+).

Belongs to the peptidase M48B family. Requires Zn(2+) as cofactor.

It localises to the cell membrane. The chain is Protease HtpX homolog from Streptococcus equi subsp. equi (strain 4047).